Consider the following 180-residue polypeptide: Oligoribonuclease (180 aa).

Positions 7–170 (LIWIDLEMTG…DDIRESLAEL (164 aa)) constitute an Exonuclease domain. Residue Tyr128 is part of the active site.

The protein belongs to the oligoribonuclease family.

The protein localises to the cytoplasm. In terms of biological role, 3'-to-5' exoribonuclease specific for small oligoribonucleotides. The sequence is that of Oligoribonuclease from Pectobacterium atrosepticum (strain SCRI 1043 / ATCC BAA-672) (Erwinia carotovora subsp. atroseptica).